The chain runs to 240 residues: DNA repair protein RecO (240 aa).

The protein belongs to the RecO family.

In terms of biological role, involved in DNA repair and RecF pathway recombination. In Wolbachia sp. subsp. Drosophila simulans (strain wRi), this protein is DNA repair protein RecO.